Here is a 654-residue protein sequence, read N- to C-terminus: Threonine--tRNA ligase (654 aa).

The 63-residue stretch at 1 to 63 (MASINVKFPD…TTDGSIEIIA (63 aa)) folds into the TGS domain. The interval 248–546 (DHRVIGNELD…LTEIYKGAFP (299 aa)) is catalytic. C342, H393, and H523 together coordinate Zn(2+).

It belongs to the class-II aminoacyl-tRNA synthetase family. As to quaternary structure, homodimer. Zn(2+) is required as a cofactor.

It is found in the cytoplasm. It carries out the reaction tRNA(Thr) + L-threonine + ATP = L-threonyl-tRNA(Thr) + AMP + diphosphate + H(+). Catalyzes the attachment of threonine to tRNA(Thr) in a two-step reaction: L-threonine is first activated by ATP to form Thr-AMP and then transferred to the acceptor end of tRNA(Thr). Also edits incorrectly charged L-seryl-tRNA(Thr). The protein is Threonine--tRNA ligase of Lactiplantibacillus plantarum (strain ATCC BAA-793 / NCIMB 8826 / WCFS1) (Lactobacillus plantarum).